Here is an 84-residue protein sequence, read N- to C-terminus: Beta-cardiotoxin CTX15 (84 aa).

The first 21 residues, 1–21 (MKTLLLTLVVVTIVCLDLGYT), serve as a signal peptide directing secretion. Cystine bridges form between C24–C43, C36–C61, C65–C76, and C77–C82.

It belongs to the three-finger toxin family. Short-chain subfamily. Aminergic toxin sub-subfamily. Expressed by the venom gland.

The protein resides in the secreted. Functionally, acts as a beta-blocker by binding to beta-1 and beta-2 adrenergic receptors (ADRB1 and ADRB2). It dose-dependently decreases the heart rate (bradycardia), whereas conventional cardiotoxins increases it. At 100 mg/kg, intraperitoneal injection into mice provokes labored breathing, impaired locomotion, lack of response to external stimuli, and death (after 30 minutes). The protein is Beta-cardiotoxin CTX15 of Ophiophagus hannah (King cobra).